The chain runs to 146 residues: MNLLLLLQVASFLSDSKVPGEDGTSSTSGMLDLLRDQVDSLSINDSTTEPKTRLDPGLYPWLKWTETAYRSSTRSLASTIVMGALVQQRGSGNGITMRELELSLGLDFTSECDWLKTCYVNKNFVFLSEKEIAVNMEVEKFICNEN.

As to quaternary structure, interacts with host HSC70.

The protein localises to the host cytoplasm. Its function is as follows. May mediate the nuclear export of encapsidated genomic RNAs (ribonucleoproteins, RNPs). Interaction of viral NEP with M1-Hsc70 is thought to promote nuclear export of the viral encapsidated genomes. The sequence is that of Nuclear export protein from Infectious salmon anemia virus (isolate Atlantic salmon/Norway/810/9/99) (ISAV).